Reading from the N-terminus, the 351-residue chain is MTKISKIIDELNNQQADAAWITTPLNVYYFTGYRSEPHERLFALLIKKDGKQVLFCPKMEVEEVKASPFTGEIVGYLDTENPFSLYPQTINKLLIESEHLTVARQKQLISGFNVNSFGDVDLTIKQLRNIKSEDEISKIRKAAELADKCIEIGVSYLKEGVTEREVVNHIEQTIKQYGVNEMSFDTMVLFGDHAASPHGTPGDRRLKSNEYVLFDLGVIYEHYCSDMTRTIKFGEPSKEAQEIYNIVLEAETSAIQAIKPGIPLKDIDHIARNIISEKGYGEYFPHRLGHGLGLQEHEYQDVSSTNSNLLEAGMVITIEPGIYVPSVAGVRIEDDILVTNEGYEVLTHYEK.

Residues aspartate 215, aspartate 226, histidine 290, glutamate 319, and glutamate 333 each coordinate Mn(2+).

It belongs to the peptidase M24B family. Mn(2+) serves as cofactor.

This is an uncharacterized protein from Staphylococcus aureus (strain MW2).